The chain runs to 366 residues: 5-hydroxytryptamine receptor 1F (366 aa).

Topologically, residues 1-24 (MDFLNSSDQNLTSEELLNRMPSKI) are extracellular. Asn-5 and Asn-10 each carry an N-linked (GlcNAc...) asparagine glycan. A helical membrane pass occupies residues 25–49 (LVSLTLSGLALMTTTINSLVIAAII). At 50–59 (VTRKLHHPAN) the chain is on the cytoplasmic side. The chain crosses the membrane as a helical span at residues 60 to 81 (YLICSLAVTDFLVAVLVMPFSI). The Extracellular segment spans residues 82–96 (VYIVRESWIMGQVVC). Cys-96 and Cys-172 are disulfide-bonded. Residues 97–119 (DIWLSVDITCCTCSILHLSAIAL) form a helical membrane-spanning segment. Positions 103 and 107 each coordinate serotonin. The DRY motif; important for ligand-induced conformation changes motif lies at 120–122 (DRY). Residues 120–139 (DRYRAITDAVEYARKRTPKH) are Cytoplasmic-facing. The chain crosses the membrane as a helical span at residues 140-159 (AGIMITIVWIISVFISMPPL). The Extracellular segment spans residues 160-178 (FWRHQGTSRDDECIIKHDH). The chain crosses the membrane as a helical span at residues 179–202 (IVSTIYSTFGAFYIPLALILILYY). Residues 203-291 (KIYRAAKTLY…KISGTRERKA (89 aa)) are Cytoplasmic-facing. Residues 292 to 315 (ATTLGLILGAFVICWLPFFVKELV) traverse the membrane as a helical segment. Over 316–327 (VNVCDKCKISEE) the chain is Extracellular. The chain crosses the membrane as a helical span at residues 328–350 (MSNFLAWLGYLNSLINPLIYTIF). The short motif at 343-347 (NPLIY) is the NPxxY motif; important for ligand-induced conformation changes and signaling element. At 351-366 (NEDFKKAFQKLVRCRC) the chain is on the cytoplasmic side.

Belongs to the G-protein coupled receptor 1 family.

The protein localises to the cell membrane. In terms of biological role, G-protein coupled receptor for 5-hydroxytryptamine (serotonin). Also functions as a receptor for various alkaloids and psychoactive substances. Receptor for lasmiditan, a drug for the treatment of acute migraine. Ligand binding causes a conformation change that triggers signaling via guanine nucleotide-binding proteins (G proteins) and modulates the activity of downstream effectors, such as adenylate cyclase. HTR1F is coupled to G(i)/G(o) G alpha proteins and mediates inhibitory neurotransmission by inhibiting adenylate cyclase activity. In Homo sapiens (Human), this protein is 5-hydroxytryptamine receptor 1F.